A 355-amino-acid polypeptide reads, in one-letter code: MLASKLDPFLKRFEELNSLLSSSDIINDISKMTTLSKEQKNLEPIVLKAKEYLKTLDNIEENKALLNDPELGELAKEELKTLEELKPKLEEEIKILLLPKDPNDERNIFLEIRAGAGGDEASLFVGDLVKAYARYAENRGYKLEIVSSSEGSVGGFKEIIMLVKGTGAYSRLKYEGGTHRVQRVPQTESQGRVHTSAITVAVMPEVDDIEIEINPNDLKVDVMRSSGHGGQSVNTTDSAVRITHIPTGIVVVNQDGKSQHKNKESAMKVLKARLYEMQESERLAKESEARKSQVGSGDRSERIRTYNFPQNRISDHRINLTLYRLDAIMQDGLFDEIIEPLITHHQAQALQEQNL.

Q231 is subject to N5-methylglutamine. The span at 280–291 shows a compositional bias: basic and acidic residues; that stretch reads SERLAKESEARK. The tract at residues 280-303 is disordered; that stretch reads SERLAKESEARKSQVGSGDRSERI.

It belongs to the prokaryotic/mitochondrial release factor family. Methylated by PrmC. Methylation increases the termination efficiency of RF1.

It localises to the cytoplasm. Functionally, peptide chain release factor 1 directs the termination of translation in response to the peptide chain termination codons UAG and UAA. The chain is Peptide chain release factor 1 from Campylobacter jejuni (strain RM1221).